A 397-amino-acid chain; its full sequence is CCA-adding enzyme (397 aa).

The ATP site is built by Gly32 and Arg35. Positions 32 and 35 each coordinate CTP. Asp45 and Asp47 together coordinate Mg(2+). 5 residues coordinate ATP: Arg116, Asp159, Arg162, Arg165, and Arg168. Residues Arg116, Asp159, Arg162, Arg165, and Arg168 each coordinate CTP.

It belongs to the tRNA nucleotidyltransferase/poly(A) polymerase family. Bacterial CCA-adding enzyme type 3 subfamily. As to quaternary structure, homodimer. Mg(2+) is required as a cofactor.

The enzyme catalyses a tRNA precursor + 2 CTP + ATP = a tRNA with a 3' CCA end + 3 diphosphate. It carries out the reaction a tRNA with a 3' CCA end + 2 CTP + ATP = a tRNA with a 3' CCACCA end + 3 diphosphate. Its function is as follows. Catalyzes the addition and repair of the essential 3'-terminal CCA sequence in tRNAs without using a nucleic acid template. Adds these three nucleotides in the order of C, C, and A to the tRNA nucleotide-73, using CTP and ATP as substrates and producing inorganic pyrophosphate. tRNA 3'-terminal CCA addition is required both for tRNA processing and repair. Also involved in tRNA surveillance by mediating tandem CCA addition to generate a CCACCA at the 3' terminus of unstable tRNAs. While stable tRNAs receive only 3'-terminal CCA, unstable tRNAs are marked with CCACCA and rapidly degraded. The sequence is that of CCA-adding enzyme from Levilactobacillus brevis (strain ATCC 367 / BCRC 12310 / CIP 105137 / JCM 1170 / LMG 11437 / NCIMB 947 / NCTC 947) (Lactobacillus brevis).